The following is a 216-amino-acid chain: Outer-membrane lipoprotein LolB (216 aa).

A signal peptide spans 1 to 21 (MLIFKICFYRLLPLSVLLLAA). Cys22 carries the N-palmitoyl cysteine lipid modification. Residue Cys22 is the site of S-diacylglycerol cysteine attachment.

The protein belongs to the LolB family. In terms of assembly, monomer.

It localises to the cell outer membrane. Functionally, plays a critical role in the incorporation of lipoproteins in the outer membrane after they are released by the LolA protein. The sequence is that of Outer-membrane lipoprotein LolB from Hamiltonella defensa subsp. Acyrthosiphon pisum (strain 5AT).